The sequence spans 1238 residues: Lysine-specific demethylase JMJ703 (1238 aa).

The interval 56–79 (EECQPSAAVSRSDTPCSTSGTQTC) is disordered. A compositionally biased stretch (polar residues) spans 62 to 79 (AAVSRSDTPCSTSGTQTC). The JmjN domain maps to 154 to 195 (APVFYPTEEEFEDTLKYIESIRPMAEPYGICRIVPPSSWKPP). The disordered stretch occupies residues 215-266 (KVDKLQNRKSSKKGRRGGMMKRRKLAESEENSATAHTQTGMQQSPERFGFEP). The span at 221-238 (NRKSSKKGRRGGMMKRRK) shows a compositional bias: basic residues. Positions 245–259 (NSATAHTQTGMQQSP) are enriched in polar residues. In terms of domain architecture, JmjC spans 348-514 (KYAQSGWNLN…IGHNAVELYR (167 aa)). 3 residues coordinate Fe cation: His-394, Glu-396, and His-482. Disordered stretches follow at residues 699–725 (GPRR…QKDE), 777–798 (YNGG…SSPS), 834–863 (TGDS…SSLE), and 910–978 (ASSQ…LQRT). Low complexity predominate over residues 706-719 (SQASAVSLVSSSTS). Residues 910–923 (ASSQQFVRTGPWTQ) show a composition bias toward polar residues. Residues 924–936 (SASHEASSPSTSA) are compositionally biased toward low complexity. Residues 964-978 (SFSNQQPNDGRLQRT) are compositionally biased toward polar residues. The 59-residue stretch at 1019 to 1077 (VVHRFKCSVEPLEIGVVLSGRLWSSSQAIFPKGFRSRVKYFSIVDPIQMAYYISEILDA) folds into the FYR N-terminal domain. An FYR C-terminal domain is found at 1079-1169 (MQGPLFMVKL…HICTEYWRSR (91 aa)).

Fe(2+) serves as cofactor. As to expression, expressed in roots, leaf sheaths, stems and panicles.

The protein resides in the nucleus. It carries out the reaction N(6),N(6),N(6)-trimethyl-L-lysyl(4)-[histone H3] + 3 2-oxoglutarate + 3 O2 = L-lysyl(4)-[histone H3] + 3 formaldehyde + 3 succinate + 3 CO2. Its function is as follows. Histone demethylase that demethylates 'Lys-4' (H3K4me) of histone H3 with a specific activity for H3K4me3, H3K4me2 and H3K4me1. No activity on H3K9me3/2/1, H3K27me3/2/1 and H3K36me3/2/1. Involved in the control of stem elongation by regulating methylation states of H3K4me3 on cytokinin oxidase (CKX) gene family, which may cause increased expression of CKX genes and reduced cytokinin levels. Prevents ectopic retrotransposition by regulating the levels of H3K4me3 in two non-LTR retrotransposons KARMA and LINE-1 (L1) and reinforcing their repressed states. The sequence is that of Lysine-specific demethylase JMJ703 (JMJ703) from Oryza sativa subsp. japonica (Rice).